Consider the following 1341-residue polypeptide: MPVSTALHQDGSQERPRSLVSTTSSSGSSRDSHSAMEEPTGSEASAQNGTGSPWDRHVPNSNNNSSGWLNMKGPLSPFNGRAGTSPAYHKLSYLGRVVREIVETERMYVQDLRSIVEDYLLKIIDTPGLLKPEQVSALFGNIESIYALNSQLLRDLDSCNSDPVAVASCFVERSQEFDIYTQYCNNYPNSVAALTECMQDKQQAKFFRDRQELLQHSLPLGSYLLKPVQRVLKYHLLLQEIAKHFDEEEDGFEVVEDAIDTMTCVAWYINDMKRRHEHAVRLQEIQSLLINWKGPDLTTYGELVLEATFRVHRVRNDRTFFLFDKILLITKKRGDHFVYKGHIPCSSLMLIESTRDSLCFTVTHYKHSKQQYSIQAKTVEEKRSWTHHIKRLILENHHATIPQKAKEAILEMDSYYPSRYRCSPERMKKAWSSQDEVSSHVRQGRRQSEPGHTLFSRATLPSRQQGFEMPGLKGRRKSEPTRHLLRQLSEKARAVGMKHAGSAGALLDFGQPAHAQKQQPEAERAAREELEEEEELVEEEEQRQQSFSGSLEGLAGHDGSEKVPGPELPGSEEEEEEEESLAVAEQGKRHRESEGSKGCRRPSNRSPTSAEKRMSFESVSSLPEVETDPEPGAEQEAFAALEGPSTEEMPSDPEFPEALETQLHAPKGLLGVDNPAAVVDFVEPEGSEDLKPLSSEEEEEEEMEAAQEPESLLPPSVLDQASVIAERFASSFSRRSSLAIEDGKSSGLGTPRLISRSSSVLSLEGSDKGLARWSSIGDSLSNPPTPEVIIGADMVTDNGPSVNGTESPSAGSGCPTEQDRSSCKKKESALSTRDRQLLDKIKNYYENAEHHDAGFSIRRRESLSYIPKGLVRSSVSRFNSLPKPDSEPAAPVGYKRPGSSRPASWTLFDLPGPRTDKGDPAPITDAEFCPSSEIAKIWERMESSERSPRTGSGQSQANGFELQEPLFILEEHELGAITEESAVASPESASPTEQPSPAHLARELKELVKELSSSVQGELVTPLHPRIVQLSHVMDSHVSERVKNKVYQLARQYSLRIKNIKAARPPLQWEKVTPDQEEQVPSISGLPEEAGELSGGKARRKPVLSLLSYEQLVAQEHGTSKSSAAVETSPRRFSFSPSAVSPRTTSPGARSSARSPLSPFDTETFNWPDVRELCSKYTSHDKTAQVESSWPRSLLVNRSRSLPENIVEPPMSGKADRCCGLNTHRRLGDGEASQPPLPESPPQSQLNGGDALYVTADLTLENNQRVIIMEKGPHPSSTVGLEEDSGKESSSPVALKGQGQGFQASAEYQPKEHGPRDSADTNKQGRVRNLREKFQALNSVG.

A disordered region spans residues 1–68 (MPVSTALHQD…PNSNNNSSGW (68 aa)). Over residues 18-29 (SLVSTTSSSGSS) the composition is skewed to low complexity. Polar residues-rich tracts occupy residues 42-51 (SEASAQNGTG) and 59-68 (PNSNNNSSGW). S76 is modified (phosphoserine). A DH domain is found at 93–272 (YLGRVVREIV…TCVAWYINDM (180 aa)). The 99-residue stretch at 296 to 394 (DLTTYGELVL…WTHHIKRLIL (99 aa)) folds into the PH domain. Residues S433 and S502 each carry the phosphoserine modification. The segment at 433 to 482 (SQDEVSSHVRQGRRQSEPGHTLFSRATLPSRQQGFEMPGLKGRRKSEPTR) is disordered. Disordered stretches follow at residues 508 to 657 (DFGQ…EFPE) and 684 to 715 (PEGS…LLPP). 2 stretches are compositionally biased toward acidic residues: residues 529–541 (ELEE…EEEE) and 570–580 (GSEEEEEEEES). Phosphoserine occurs at positions 571, 694, 695, 737, 759, 762, and 766. Acidic residues predominate over residues 695–707 (SEEEEEEEMEAAQ). Residues 775–832 (SIGDSLSNPPTPEVIIGADMVTDNGPSVNGTESPSAGSGCPTEQDRSSCKKKESALST) form a disordered region. Polar residues predominate over residues 798–810 (NGPSVNGTESPSA). Positions 817 to 832 (EQDRSSCKKKESALST) are enriched in basic and acidic residues. S862, S899, S900, and S947 each carry phosphoserine. Disordered stretches follow at residues 876-930 (SRFN…EFCP), 939-958 (ERME…SQAN), 1071-1097 (KVTP…SGGK), and 1117-1162 (HGTS…PFDT). The span at 939 to 948 (ERMESSERSP) shows a compositional bias: basic and acidic residues. Residues 949–958 (RTGSGQSQAN) are compositionally biased toward polar residues. Phosphoserine occurs at positions 1129, 1134, 1136, 1141, 1155, 1158, and 1201. Residues 1135–1162 (FSPSAVSPRTTSPGARSSARSPLSPFDT) show a composition bias toward polar residues. 2 disordered regions span residues 1204–1249 (ENIV…LNGG) and 1271–1341 (KGPH…NSVG). Positions 1309 to 1320 (QPKEHGPRDSAD) are enriched in basic and acidic residues.

It is found in the cytoplasm. The protein localises to the cytoskeleton. Plays a role in controlling cell polarity and cell motility by selectively binding newly polymerized actin and activating RAC1 and CDC42 to enhance local actin polymerization. This chain is Pleckstrin homology domain-containing family G member 3, found in Mus musculus (Mouse).